A 268-amino-acid polypeptide reads, in one-letter code: Ubiquinone biosynthesis protein COQ4 homolog, mitochondrial (268 aa).

The N-terminal 25 residues, 1 to 25 (MMQRCLRLQKPLALRRGLHLAQVNS), are a transit peptide targeting the mitochondrion. Zn(2+) is bound by residues His-171, Asp-172, His-175, and Glu-187.

It belongs to the COQ4 family. As to quaternary structure, component of a multi-subunit COQ enzyme complex. Requires Zn(2+) as cofactor.

It localises to the mitochondrion inner membrane. The catalysed reaction is a 4-hydroxy-3-methoxy-5-(all-trans-polyprenyl)benzoate + H(+) = a 2-methoxy-6-(all-trans-polyprenyl)phenol + CO2. It functions in the pathway cofactor biosynthesis; ubiquinone biosynthesis. In terms of biological role, lyase that catalyzes the C1-decarboxylation of 4-hydroxy-3-methoxy-5-(all-trans-polyprenyl)benzoic acid into 2-methoxy-6-(all-trans-polyprenyl)phenol during ubiquinone biosynthesis. The protein is Ubiquinone biosynthesis protein COQ4 homolog, mitochondrial of Drosophila simulans (Fruit fly).